Reading from the N-terminus, the 471-residue chain is Citrate synthase, mitochondrial (471 aa).

The N-terminal 18 residues, M1–G18, are a transit peptide targeting the mitochondrion. Residues H307, H353, and D408 contribute to the active site.

This sequence belongs to the citrate synthase family. In terms of assembly, homodimer.

It localises to the mitochondrion matrix. The catalysed reaction is oxaloacetate + acetyl-CoA + H2O = citrate + CoA + H(+). It functions in the pathway carbohydrate metabolism; tricarboxylic acid cycle; isocitrate from oxaloacetate: step 1/2. This is Citrate synthase, mitochondrial (CIT) from Citrus maxima (Pomelo).